The primary structure comprises 377 residues: Chaperone protein DnaJ (377 aa).

In terms of domain architecture, J spans 5–70 (DYYEILGVER…EKRAAYDQYG (66 aa)). The segment at 134-212 (GITKDIQIQT…CHGDGRVHKT (79 aa)) adopts a CR-type zinc-finger fold. Zn(2+) contacts are provided by Cys147, Cys150, Cys164, Cys167, Cys186, Cys189, Cys200, and Cys203. CXXCXGXG motif repeat units lie at residues 147–154 (CDHCNGSG), 164–171 (CPTCHGHG), 186–193 (CPHCHGTG), and 200–207 (CKKCHGDG).

It belongs to the DnaJ family. Homodimer. It depends on Zn(2+) as a cofactor.

The protein resides in the cytoplasm. Its function is as follows. Participates actively in the response to hyperosmotic and heat shock by preventing the aggregation of stress-denatured proteins and by disaggregating proteins, also in an autonomous, DnaK-independent fashion. Unfolded proteins bind initially to DnaJ; upon interaction with the DnaJ-bound protein, DnaK hydrolyzes its bound ATP, resulting in the formation of a stable complex. GrpE releases ADP from DnaK; ATP binding to DnaK triggers the release of the substrate protein, thus completing the reaction cycle. Several rounds of ATP-dependent interactions between DnaJ, DnaK and GrpE are required for fully efficient folding. Also involved, together with DnaK and GrpE, in the DNA replication of plasmids through activation of initiation proteins. The polypeptide is Chaperone protein DnaJ (Actinobacillus succinogenes (strain ATCC 55618 / DSM 22257 / CCUG 43843 / 130Z)).